The chain runs to 447 residues: Argininosuccinate synthase (447 aa).

ATP-binding positions include 17–25 and alanine 43; that span reads AFSGGLDTS. Tyrosine 99 is an L-citrulline binding site. Residues glycine 129 and threonine 131 each contribute to the ATP site. 3 residues coordinate L-aspartate: threonine 131, asparagine 135, and aspartate 136. L-citrulline is bound at residue asparagine 135. Aspartate 136 contributes to the ATP binding site. The L-citrulline site is built by arginine 139 and serine 192. Aspartate 194 is an ATP binding site. L-citrulline is bound by residues threonine 201, glutamate 203, and glutamate 280.

Belongs to the argininosuccinate synthase family. Type 2 subfamily. As to quaternary structure, homotetramer.

Its subcellular location is the cytoplasm. The catalysed reaction is L-citrulline + L-aspartate + ATP = 2-(N(omega)-L-arginino)succinate + AMP + diphosphate + H(+). Its pathway is amino-acid biosynthesis; L-arginine biosynthesis; L-arginine from L-ornithine and carbamoyl phosphate: step 2/3. The protein is Argininosuccinate synthase of Escherichia coli O8 (strain IAI1).